The following is a 156-amino-acid chain: Deoxyuridine 5'-triphosphate nucleotidohydrolase (156 aa).

Residues 76–78 (RSG), asparagine 89, 93–95 (TVD), and lysine 103 contribute to the substrate site.

Belongs to the dUTPase family. Mg(2+) serves as cofactor.

The catalysed reaction is dUTP + H2O = dUMP + diphosphate + H(+). It functions in the pathway pyrimidine metabolism; dUMP biosynthesis; dUMP from dCTP (dUTP route): step 2/2. This enzyme is involved in nucleotide metabolism: it produces dUMP, the immediate precursor of thymidine nucleotides and it decreases the intracellular concentration of dUTP so that uracil cannot be incorporated into DNA. The sequence is that of Deoxyuridine 5'-triphosphate nucleotidohydrolase from Agrobacterium fabrum (strain C58 / ATCC 33970) (Agrobacterium tumefaciens (strain C58)).